Consider the following 338-residue polypeptide: MIVRDILEQIVAGQDLSRKETETVFAAIMAGAWTPAQIGALLMGLRMKGQRVEELVGATQALRACMTRVEVSTDHLLDTCGTGGDALSTFNISTVSAVVAAAGGARVAKHGNRSMVSRSGSADVLEAAGLRMDMSPAEVADSIERIGIGFLFAPAHHGAMRYAVGPRKELAIRSLFNLMGPLSNPAGAPHQVLGVYAERWLIPMAEAARELGSRHVLVVHGHDGLDEISLSGPSDIAELKDGMISRSRIQPEDFGLSSAPLATLQIDSVAAALAAAEEVLQNRPGPRRDVVLLNAGAALYAADVVPDMAVGVVVARAVLKSGAAWDKWQALLGRTSQG.

5-phospho-alpha-D-ribose 1-diphosphate is bound by residues Gly-81, 84–85 (GD), Thr-89, 91–94 (NIST), 109–117 (KHGNRSMVS), and Ser-121. Gly-81 is an anthranilate binding site. Ser-93 lines the Mg(2+) pocket. Asn-112 lines the anthranilate pocket. Arg-167 lines the anthranilate pocket. Asp-226 and Glu-227 together coordinate Mg(2+).

It belongs to the anthranilate phosphoribosyltransferase family. In terms of assembly, homodimer. Mg(2+) is required as a cofactor.

It carries out the reaction N-(5-phospho-beta-D-ribosyl)anthranilate + diphosphate = 5-phospho-alpha-D-ribose 1-diphosphate + anthranilate. The protein operates within amino-acid biosynthesis; L-tryptophan biosynthesis; L-tryptophan from chorismate: step 2/5. Catalyzes the transfer of the phosphoribosyl group of 5-phosphorylribose-1-pyrophosphate (PRPP) to anthranilate to yield N-(5'-phosphoribosyl)-anthranilate (PRA). The chain is Anthranilate phosphoribosyltransferase from Acidithiobacillus ferrooxidans (strain ATCC 23270 / DSM 14882 / CIP 104768 / NCIMB 8455) (Ferrobacillus ferrooxidans (strain ATCC 23270)).